A 210-amino-acid polypeptide reads, in one-letter code: Imidazoleglycerol-phosphate dehydratase (210 aa).

This sequence belongs to the imidazoleglycerol-phosphate dehydratase family.

It localises to the cytoplasm. It catalyses the reaction D-erythro-1-(imidazol-4-yl)glycerol 3-phosphate = 3-(imidazol-4-yl)-2-oxopropyl phosphate + H2O. It participates in amino-acid biosynthesis; L-histidine biosynthesis; L-histidine from 5-phospho-alpha-D-ribose 1-diphosphate: step 6/9. This is Imidazoleglycerol-phosphate dehydratase from Acidovorax ebreus (strain TPSY) (Diaphorobacter sp. (strain TPSY)).